Consider the following 177-residue polypeptide: NADH-quinone oxidoreductase subunit B (177 aa).

Positions 36, 37, 101, and 130 each coordinate [4Fe-4S] cluster.

Belongs to the complex I 20 kDa subunit family. NDH-1 is composed of 14 different subunits. Subunits NuoB, C, D, E, F, and G constitute the peripheral sector of the complex. [4Fe-4S] cluster serves as cofactor.

It is found in the cell inner membrane. The enzyme catalyses a quinone + NADH + 5 H(+)(in) = a quinol + NAD(+) + 4 H(+)(out). NDH-1 shuttles electrons from NADH, via FMN and iron-sulfur (Fe-S) centers, to quinones in the respiratory chain. The immediate electron acceptor for the enzyme in this species is believed to be ubiquinone. Couples the redox reaction to proton translocation (for every two electrons transferred, four hydrogen ions are translocated across the cytoplasmic membrane), and thus conserves the redox energy in a proton gradient. This is NADH-quinone oxidoreductase subunit B from Hydrogenobaculum sp. (strain Y04AAS1).